The sequence spans 635 residues: Arabinoxylan arabinofuranohydrolase (635 aa).

The signal sequence occupies residues 1-26 (MIRKCLVLFLSFALLLSVFPMLNVDA). Aspartate 49 (proton acceptor) is an active-site residue. Glutamate 248 serves as the catalytic Proton donor. Substrate is bound at residue asparagine 311. CBM6 domains lie at 379–508 (TRVE…WQFT) and 517–634 (TKVE…IEFS). The Ca(2+) site is built by glutamate 382, glutamate 384, asparagine 406, leucine 407, aspartate 503, glutamate 520, glutamate 522, aspartate 539, tyrosine 544, aspartate 620, tryptophan 624, aspartate 625, and aspartate 629.

Belongs to the glycosyl hydrolase 43 family.

It localises to the secreted. The enzyme catalyses Hydrolysis of terminal non-reducing alpha-L-arabinofuranoside residues in alpha-L-arabinosides.. Its pathway is glycan degradation; xylan degradation. With respect to regulation, activated by calcium and magnesium. Inhibited by copper. Its function is as follows. Cleaves arabinose units from O-2- or O-3-monosubstituted xylose residues, thereby assisting in arabinoxylan (AX) and short-chain arabinoxylo-oligosaccharide (AXOS) degradation. Preferres wheat flour xylan over oat spelt xylan as substrate. Does not display endoxylanase activity. This Paenibacillus polymyxa (Bacillus polymyxa) protein is Arabinoxylan arabinofuranohydrolase (xynD).